Consider the following 300-residue polypeptide: 7-methylguanosine phosphate-specific 5'-nucleotidase (300 aa).

Catalysis depends on Asp-41, which acts as the Nucleophile. Mg(2+) is bound by residues Asp-41 and Asp-43. The active-site Proton donor is Asp-43. Position 88 (Glu-88) interacts with CMP. Position 88 (Glu-88) interacts with N(7)-methyl-GMP. Substrate contacts are provided by residues 156-157 and Lys-205; that span reads SA. Asp-230 contributes to the Mg(2+) binding site. Residue Lys-256 is modified to N6-acetyllysine.

It belongs to the pyrimidine 5'-nucleotidase family. Monomer.

The protein resides in the cytoplasm. It catalyses the reaction N(7)-methyl-GMP + H2O = N(7)-methylguanosine + phosphate. It carries out the reaction CMP + H2O = cytidine + phosphate. The enzyme catalyses a ribonucleoside 5'-phosphate + H2O = a ribonucleoside + phosphate. Its function is as follows. Specifically hydrolyzes 7-methylguanosine monophosphate (m(7)GMP) to 7-methylguanosine and inorganic phosphate. The specific activity for m(7)GMP may protect cells against undesired salvage of m(7)GMP and its incorporation into nucleic acids. Also has weak activity for CMP. UMP and purine nucleotides are poor substrates. This is 7-methylguanosine phosphate-specific 5'-nucleotidase (NT5C3B) from Homo sapiens (Human).